Reading from the N-terminus, the 464-residue chain is Probable 3-ketoacyl-CoA synthase 21 (464 aa).

Residues 21–41 traverse the membrane as a helical segment; that stretch reads LLSSGVSVFEIFAGLLVVHLI. In terms of domain architecture, FAE spans 42 to 333; that stretch reads YQRIRTRVKV…VIQHILCKKL (292 aa). Catalysis depends on residues Cys-187, His-352, His-356, His-385, and Asn-389.

Belongs to the thiolase-like superfamily. Chalcone/stilbene synthases family. Expressed in flowers.

It localises to the membrane. It catalyses the reaction a very-long-chain acyl-CoA + malonyl-CoA + H(+) = a very-long-chain 3-oxoacyl-CoA + CO2 + CoA. It functions in the pathway lipid metabolism; fatty acid biosynthesis. This Arabidopsis thaliana (Mouse-ear cress) protein is Probable 3-ketoacyl-CoA synthase 21.